The sequence spans 721 residues: Glycine--tRNA ligase beta subunit (721 aa).

This sequence belongs to the class-II aminoacyl-tRNA synthetase family. Tetramer of two alpha and two beta subunits.

It is found in the cytoplasm. The catalysed reaction is tRNA(Gly) + glycine + ATP = glycyl-tRNA(Gly) + AMP + diphosphate. The protein is Glycine--tRNA ligase beta subunit of Sinorhizobium fredii (strain NBRC 101917 / NGR234).